We begin with the raw amino-acid sequence, 34 residues long: MRLRRLFKQPSTRVLGVTNCPRQQGHQKRREQPD.

Residues 1-34 (MRLRRLFKQPSTRVLGVTNCPRQQGHQKRREQPD) are disordered. Over residues 25–34 (GHQKRREQPD) the composition is skewed to basic residues.

This is an uncharacterized protein from Schizosaccharomyces pombe (strain 972 / ATCC 24843) (Fission yeast).